Consider the following 194-residue polypeptide: Transcriptional repressor NrdR (194 aa).

A zinc finger spans residues cysteine 3–cysteine 33. One can recognise an ATP-cone domain in the interval proline 48 to glutamate 138. Residues glutamate 168–serine 179 are compositionally biased toward basic and acidic residues. The interval glutamate 168–asparagine 194 is disordered. A compositionally biased stretch (pro residues) spans arginine 185 to asparagine 194.

Belongs to the NrdR family. Zn(2+) serves as cofactor.

Its function is as follows. Negatively regulates transcription of bacterial ribonucleotide reductase nrd genes and operons by binding to NrdR-boxes. This is Transcriptional repressor NrdR from Bdellovibrio bacteriovorus (strain ATCC 15356 / DSM 50701 / NCIMB 9529 / HD100).